The sequence spans 362 residues: NAD(P)H-quinone oxidoreductase subunit 1, chloroplastic (362 aa).

A run of 8 helical transmembrane segments spans residues 29-49, 103-123, 128-148, 164-184, 202-222, 247-267, 303-323, and 335-355; these read ILPI…IVWL, IAVI…HFVL, IGVF…LMAG, AAQS…ISLL, FFGW…ISSL, YSGI…LVSS, TIGI…SITI, and LLNL…LLTT.

The protein belongs to the complex I subunit 1 family. In terms of assembly, NDH is composed of at least 16 different subunits, 5 of which are encoded in the nucleus.

It localises to the plastid. It is found in the chloroplast thylakoid membrane. The catalysed reaction is a plastoquinone + NADH + (n+1) H(+)(in) = a plastoquinol + NAD(+) + n H(+)(out). It carries out the reaction a plastoquinone + NADPH + (n+1) H(+)(in) = a plastoquinol + NADP(+) + n H(+)(out). Functionally, NDH shuttles electrons from NAD(P)H:plastoquinone, via FMN and iron-sulfur (Fe-S) centers, to quinones in the photosynthetic chain and possibly in a chloroplast respiratory chain. The immediate electron acceptor for the enzyme in this species is believed to be plastoquinone. Couples the redox reaction to proton translocation, and thus conserves the redox energy in a proton gradient. This is NAD(P)H-quinone oxidoreductase subunit 1, chloroplastic from Agrostis stolonifera (Creeping bentgrass).